A 663-amino-acid chain; its full sequence is GPI mannosyltransferase 3 (663 aa).

Residues 1-11 are compositionally biased toward basic residues; that stretch reads MPMSARSRRSN. The interval 1-44 is disordered; the sequence is MPMSARSRRSNPRLPPSPSSSSSSDAVRASPHSSPPSRLRPPSA. The segment covering 19–42 has biased composition (low complexity); it reads SSSSSSDAVRASPHSSPPSRLRPP. 8 consecutive transmembrane segments (helical) span residues 47 to 67, 110 to 130, 137 to 157, 226 to 246, 269 to 289, 304 to 324, 335 to 355, and 367 to 387; these read DVSS…ALTV, PLIF…LGLT, LLIA…DFYT, VLAV…FPPL, YASQ…LVGL, GSIL…LSVI, LLPA…IPAL, and LTLI…TLFH. The segment at 492–512 is disordered; it reads HIPRRPSYATPPSSQRQPTQL. The span at 501-511 shows a compositional bias: polar residues; the sequence is TPPSSQRQPTQ.

The protein belongs to the glycosyltransferase 22 family. PIGB subfamily.

It is found in the endoplasmic reticulum membrane. The protein operates within glycolipid biosynthesis; glycosylphosphatidylinositol-anchor biosynthesis. In terms of biological role, mannosyltransferase involved in glycosylphosphatidylinositol-anchor biosynthesis. Transfers the third mannose to Man2-GlcN-acyl-PI during GPI precursor assembly. The sequence is that of GPI mannosyltransferase 3 (gpi10) from Emericella nidulans (strain FGSC A4 / ATCC 38163 / CBS 112.46 / NRRL 194 / M139) (Aspergillus nidulans).